We begin with the raw amino-acid sequence, 72 residues long: Translation initiation factor IF-1 (72 aa).

An S1-like domain is found at 1–72 (MSKEENIEMQ…TKGRIIFRSR (72 aa)).

Belongs to the IF-1 family. In terms of assembly, component of the 30S ribosomal translation pre-initiation complex which assembles on the 30S ribosome in the order IF-2 and IF-3, IF-1 and N-formylmethionyl-tRNA(fMet); mRNA recruitment can occur at any time during PIC assembly.

The protein resides in the cytoplasm. Its function is as follows. One of the essential components for the initiation of protein synthesis. Stabilizes the binding of IF-2 and IF-3 on the 30S subunit to which N-formylmethionyl-tRNA(fMet) subsequently binds. Helps modulate mRNA selection, yielding the 30S pre-initiation complex (PIC). Upon addition of the 50S ribosomal subunit IF-1, IF-2 and IF-3 are released leaving the mature 70S translation initiation complex. The protein is Translation initiation factor IF-1 of Buchnera aphidicola subsp. Acyrthosiphon pisum (strain APS) (Acyrthosiphon pisum symbiotic bacterium).